The following is a 291-amino-acid chain: Bifunctional protein FolD (291 aa).

NADP(+) is bound by residues 166-168, Ile191, and Ile232; that span reads GAG.

It belongs to the tetrahydrofolate dehydrogenase/cyclohydrolase family. In terms of assembly, homodimer.

The enzyme catalyses (6R)-5,10-methylene-5,6,7,8-tetrahydrofolate + NADP(+) = (6R)-5,10-methenyltetrahydrofolate + NADPH. It catalyses the reaction (6R)-5,10-methenyltetrahydrofolate + H2O = (6R)-10-formyltetrahydrofolate + H(+). It participates in one-carbon metabolism; tetrahydrofolate interconversion. Catalyzes the oxidation of 5,10-methylenetetrahydrofolate to 5,10-methenyltetrahydrofolate and then the hydrolysis of 5,10-methenyltetrahydrofolate to 10-formyltetrahydrofolate. In Aquifex aeolicus (strain VF5), this protein is Bifunctional protein FolD.